We begin with the raw amino-acid sequence, 228 residues long: Cytidylate kinase (228 aa).

12 to 20 (GPSGSGKGT) contacts ATP.

It belongs to the cytidylate kinase family. Type 1 subfamily.

The protein resides in the cytoplasm. The catalysed reaction is CMP + ATP = CDP + ADP. It catalyses the reaction dCMP + ATP = dCDP + ADP. The sequence is that of Cytidylate kinase from Pseudomonas putida (strain W619).